The chain runs to 389 residues: Abscission/NoCut checkpoint regulator (389 aa).

An FYVE-type zinc finger spans residues 1-58; that stretch reads MESRCYGCAVKFTLFKKEYGCKNCGRAFCNGCLSFSALVPRAGNTQQKVCKQCHTILT. Residues Cys5, Cys8, Cys21, Cys24, Cys29, Cys32, Cys50, and Cys53 each contribute to the Zn(2+) site. Ser69 is subject to Phosphoserine. The short motif at 99-112 is the MIM1-A element; it reads DQAIAERLARLRQE. A Glycyl lysine isopeptide (Lys-Gly) (interchain with G-Cter in SUMO2) cross-link involves residue Lys132. Disordered regions lie at residues 158-177 and 204-227; these read PSHT…QAQQ and QNDL…SQSL. Over residues 167-177 the composition is skewed to low complexity; that stretch reads QAPDTRTQAQQ. Residues 214–226 are compositionally biased toward polar residues; sequence SQRTNSQGQASQS. Ser219 is modified (phosphoserine). Residues 226-261 adopt a coiled-coil conformation; that stretch reads SLEEEKYKLLAEAAVELQEENTRQERILALAKRLAV. The short motif at 252 to 265 is the MIM1-B element; the sequence is ILALAKRLAVLKGQ. Phosphoserine is present on Ser280.

As to quaternary structure, interacts (via MIM1-B) with VPS4A; interaction takes place at the midbody ring following cytokinesis checkpoint activation.

The protein localises to the cytoplasm. It is found in the cytoskeleton. Its subcellular location is the microtubule organizing center. The protein resides in the centrosome. It localises to the cleavage furrow. The protein localises to the midbody. It is found in the midbody ring. In terms of biological role, key regulator of abscission step in cytokinesis: part of the cytokinesis checkpoint, a process required to delay abscission to prevent both premature resolution of intercellular chromosome bridges and accumulation of DNA damage. Together with CHMP4C, required to retain abscission-competent VPS4 (VPS4A and/or VPS4B) at the midbody ring until abscission checkpoint signaling is terminated at late cytokinesis. Deactivation of AURKB results in dephosphorylation of CHMP4C followed by its dissociation from ZFYVE19/ANCHR and VPS4 and subsequent abscission. This is Abscission/NoCut checkpoint regulator (Zfyve19) from Mus musculus (Mouse).